Here is a 257-residue protein sequence, read N- to C-terminus: MLIVVSPAKTLDYESPLVISRFTQPQLLDHSAELITRARQLSPDQIASLMKISDKLAGLNAARFAQWQHDFHPDNARQALLAFKGDVYTGLAVEDFSDGDFDFAQAHLRMLSGLYGVLRPLDLMMPYRLEMGTRLDNSRGKDLYQFWGDVITQHINAALTAQGDEVLINLASDEYFKSVRPKALKGRIVTPVFKDEKNGQFKIISFYAKKARGMMARHIIKHRLTEVEQLTGFNVDGYYFVPEESDAHTLMFKRAEN.

Belongs to the UPF0246 family.

The protein is UPF0246 protein ASA_3634 of Aeromonas salmonicida (strain A449).